The sequence spans 531 residues: Unconventional prefoldin RPB5 interactor (531 aa).

M1 is modified (N-acetylmethionine). 4 disordered regions span residues M1–R24, E224–A381, K408–S470, and T500–S531. Residues P13–R24 are compositionally biased toward low complexity. 2 stretches are compositionally biased toward polar residues: residues S257–S266 and G280–H296. The segment covering D300–E319 has biased composition (acidic residues). Residue S369 is modified to Phosphoserine; by RPS6KB1. Positions N414–S424 are enriched in polar residues. S439 bears the Phosphoserine mark.

It belongs to the RNA polymerase II subunit 5-mediating protein family. In terms of assembly, homodimer. Component of the PAQosome complex which is responsible for the biogenesis of several protein complexes and which consists of R2TP complex members RUVBL1, RUVBL2, RPAP3 and PIH1D1, URI complex members PFDN2, PFDN6, PDRG1, UXT and URI1 as well as ASDURF, POLR2E and DNAAF10/WDR92. Interacts with POLR2E/RPB5, RUVBL2 and RUVBL1. Interacts with PFDN2, PFDN4 and STAP1; the interactions are phosphorylation-dependent and occur in a growth-dependent manner in the mitochondrion. Interacts with UXT. Interacts with PPP1CC; the interaction is phosphorylation-dependent and occurs in a growth factor-dependent manner. Interacts (via the middle C-terminal region) with GTF2F1 and GTF2F2. Interacts with DMAP1. Interacts with TSC1 and TSC2. Interacts with PRPF8 and EFTUD2 in a ZNHIT2-dependent manner. Phosphorylation occurs in response to androgen treatment in prostate cancer cells in a mTOR-dependent manner. Phosphorylated; hyperhosphorylated in mitochondria in a mTORC-dependent signaling pathway. Phosphorylated at Ser-369 by RPS6KB1 in a growth factor- and rapamycin-dependent manner. S6K1-mediated mitochondrial phosphorylation at Ser-369 disrupts the URI1-PPP1CC complex in the mitochondrion, relieves PPP1CC phosphatase inhibition activity and hence engages a negative feedback diminishing RPS6KB1 kinase activity, preventing sustained S6K1-dependent signaling. Phosphorylated. Phosphorylation occurs essentially on serine residues. Expressed in the spinal cord, ganglia, choroid plexus and olfactors epithelium of the developing brain. Expressed in skin, lung, kidney, testis and muscles (at protein level). Expressed strongly in brain and kidney. Expressed weakly in skeletal muscle, lung and liver.

It is found in the nucleus. Its subcellular location is the cytoplasm. The protein resides in the mitochondrion. It localises to the cell projection. The protein localises to the dendrite. Its function is as follows. Involved in gene transcription regulation. Acts as a transcriptional repressor in concert with the corepressor UXT to regulate androgen receptor (AR) transcription. May act as a tumor suppressor to repress AR-mediated gene transcription and to inhibit anchorage-independent growth in prostate cancer cells. Required for cell survival in ovarian cancer cells. Together with UXT, associates with chromatin to the NKX3-1 promoter region. Plays a central role in maintaining S6K1 signaling and BAD phosphorylation under normal growth conditions thereby protecting cells from potential deleterious effects of sustained S6K1 signaling. The URI1-PPP1CC complex acts as a central component of a negative feedback mechanism that counteracts excessive S6K1 survival signaling to BAD in response to growth factors. Mediates inhibition of PPP1CC phosphatase activity in mitochondria. Coordinates the regulation of nutrient-sensitive gene expression availability in a mTOR-dependent manner. Seems to be a scaffolding protein able to assemble a prefoldin-like complex that contains PFDs and proteins with roles in transcription and ubiquitination. The sequence is that of Unconventional prefoldin RPB5 interactor (Uri1) from Mus musculus (Mouse).